The following is a 318-amino-acid chain: NADH-ubiquinone oxidoreductase chain 1 (318 aa).

8 helical membrane-spanning segments follow: residues 2–22 (FMVN…FLTL), 71–91 (YIIA…PLPI), 98–118 (INLG…SILW), 146–166 (LAII…STLI), 171–191 (HTWL…STLA), 222–242 (LFFM…ATIF), 253–273 (EFFS…FLWV), and 294–314 (LPLT…LANI).

Belongs to the complex I subunit 1 family.

The protein resides in the mitochondrion inner membrane. It carries out the reaction a ubiquinone + NADH + 5 H(+)(in) = a ubiquinol + NAD(+) + 4 H(+)(out). Functionally, core subunit of the mitochondrial membrane respiratory chain NADH dehydrogenase (Complex I) that is believed to belong to the minimal assembly required for catalysis. Complex I functions in the transfer of electrons from NADH to the respiratory chain. The immediate electron acceptor for the enzyme is believed to be ubiquinone. This chain is NADH-ubiquinone oxidoreductase chain 1 (MT-ND1), found in Nycticebus coucang (Slow loris).